The following is a 127-amino-acid chain: Large ribosomal subunit protein bL17 (127 aa).

This sequence belongs to the bacterial ribosomal protein bL17 family. As to quaternary structure, part of the 50S ribosomal subunit. Contacts protein L32.

The sequence is that of Large ribosomal subunit protein bL17 from Escherichia fergusonii (strain ATCC 35469 / DSM 13698 / CCUG 18766 / IAM 14443 / JCM 21226 / LMG 7866 / NBRC 102419 / NCTC 12128 / CDC 0568-73).